The sequence spans 350 residues: tRNA uridine(34) hydroxylase (350 aa).

Residues 146 to 240 (DDPDALFIDM…YARKAREQGL (95 aa)) enclose the Rhodanese domain. Cys200 acts as the Cysteine persulfide intermediate in catalysis.

The protein belongs to the TrhO family.

It catalyses the reaction uridine(34) in tRNA + AH2 + O2 = 5-hydroxyuridine(34) in tRNA + A + H2O. In terms of biological role, catalyzes oxygen-dependent 5-hydroxyuridine (ho5U) modification at position 34 in tRNAs, the first step in 5-carboxymethoxyuridine (cmo5U) biosynthesis. May be part of an alternate pathway, which is able to bypass cmo5U biogenesis in a subset of tRNAs under aerobic conditions. The sequence is that of tRNA uridine(34) hydroxylase from Escherichia coli O127:H6 (strain E2348/69 / EPEC).